The sequence spans 906 residues: Toll-like receptor 12 (906 aa).

Residues 1 to 21 (MGRYWLLPGLLLSLPLVTGWS) form the signal peptide. Over 22–709 (TSNCLVTEGS…DHCPQTLELK (688 aa)) the chain is Extracellular. N59 is a glycosylation site (N-linked (GlcNAc...) asparagine). LRR repeat units lie at residues 91–114 (FPGL…LRGL), 115–140 (GQLQ…AFSD), 142–170 (ISLQ…QWLG), 198–222 (SWTL…SLQG), 224–247 (QVEI…GLQK), 267–290 (HFEL…ALAS), 291–314 (CHSL…FLTA), 316–338 (PRLQ…MNET), 341–364 (VSGL…AFSC), 366–388 (PHLR…LFQE), 389–412 (LQQL…WLAA), 414–436 (PALT…GFWG), 462–484 (LTSL…PAIF), 485–508 (PSLE…NASG), and 510–533 (FPAL…GTSN). A glycan (N-linked (GlcNAc...) asparagine) is linked at N336. N505 carries N-linked (GlcNAc...) asparagine glycosylation. The N-linked (GlcNAc...) asparagine glycan is linked to N552. 2 LRR repeats span residues 562–586 (LPSL…QLEE) and 591–614 (LPQL…AFQR). Residues 710–730 (LFLASSALVFMLIALPLLQEA) form a helical membrane-spanning segment. Over 731-906 (RNSWIPYLQA…FWTWLRSRLG (176 aa)) the chain is Cytoplasmic. The TIR domain occupies 759-905 (FLFDVFVSHC…GFWTWLRSRL (147 aa)).

This sequence belongs to the Toll-like receptor family. Binds MYD88 via their respective TIR domains. As to expression, macrophages, liver, kidney and bladder epithelial cells.

It is found in the membrane. Participates in the innate immune response to microbial agents. Acts via MYD88 and TRAF6, leading to NF-kappa-B activation, cytokine secretion and the inflammatory response. Plays a role in preventing infection of internal organs of the urogenital system. In Mus musculus (Mouse), this protein is Toll-like receptor 12.